The following is a 257-amino-acid chain: GTP cyclohydrolase FolE2 (257 aa).

It belongs to the GTP cyclohydrolase IV family.

It catalyses the reaction GTP + H2O = 7,8-dihydroneopterin 3'-triphosphate + formate + H(+). Its pathway is cofactor biosynthesis; 7,8-dihydroneopterin triphosphate biosynthesis; 7,8-dihydroneopterin triphosphate from GTP: step 1/1. Converts GTP to 7,8-dihydroneopterin triphosphate. This Dictyoglomus thermophilum (strain ATCC 35947 / DSM 3960 / H-6-12) protein is GTP cyclohydrolase FolE2.